The primary structure comprises 190 residues: Xanthine phosphoribosyltransferase (190 aa).

Xanthine-binding residues include leucine 20 and asparagine 27. 128–132 is a 5-phospho-alpha-D-ribose 1-diphosphate binding site; sequence ANGHA. Lysine 156 contacts xanthine.

It belongs to the purine/pyrimidine phosphoribosyltransferase family. Xpt subfamily. Homodimer.

It localises to the cytoplasm. The catalysed reaction is XMP + diphosphate = xanthine + 5-phospho-alpha-D-ribose 1-diphosphate. It functions in the pathway purine metabolism; XMP biosynthesis via salvage pathway; XMP from xanthine: step 1/1. Its function is as follows. Converts the preformed base xanthine, a product of nucleic acid breakdown, to xanthosine 5'-monophosphate (XMP), so it can be reused for RNA or DNA synthesis. This is Xanthine phosphoribosyltransferase from Pseudomonas paraeruginosa (strain DSM 24068 / PA7) (Pseudomonas aeruginosa (strain PA7)).